The sequence spans 518 residues: Uronate isomerase (518 aa).

The protein belongs to the metallo-dependent hydrolases superfamily. Uronate isomerase family.

It catalyses the reaction D-glucuronate = D-fructuronate. It carries out the reaction aldehydo-D-galacturonate = keto-D-tagaturonate. It participates in carbohydrate metabolism; pentose and glucuronate interconversion. The chain is Uronate isomerase (uxaC) from Corynebacterium glutamicum (strain ATCC 13032 / DSM 20300 / JCM 1318 / BCRC 11384 / CCUG 27702 / LMG 3730 / NBRC 12168 / NCIMB 10025 / NRRL B-2784 / 534).